A 60-amino-acid polypeptide reads, in one-letter code: Large ribosomal subunit protein bL32 (60 aa).

Positions 1 to 60 (MAVQQVKKSRSKRDIRRSHDSLTNPTLSTDKSTGELHLRHHVSPNGFYKGRKVVDTKSED) are disordered. Residues 7–16 (KKSRSKRDIR) are compositionally biased toward basic residues. Residues 22-31 (LTNPTLSTDK) show a composition bias toward polar residues.

The protein belongs to the bacterial ribosomal protein bL32 family.

This chain is Large ribosomal subunit protein bL32, found in Francisella tularensis subsp. tularensis (strain SCHU S4 / Schu 4).